Reading from the N-terminus, the 317-residue chain is Mitochondrial outer membrane protein porin 4 (317 aa).

Residues 1-30 (MEAETECKVPGVYSETGIPVEDPAPGLNSD) are disordered.

Belongs to the eukaryotic mitochondrial porin (TC 1.B.8.1) family.

The protein localises to the mitochondrion outer membrane. Its function is as follows. Forms a channel through the mitochondrial outer membrane that allows diffusion of small hydrophilic molecules. The channel adopts an open conformation at low or zero membrane potential and a closed conformation at potentials above 30-40 mV. The open state has a weak anion selectivity whereas the closed state is cation-selective. In Oryza sativa subsp. japonica (Rice), this protein is Mitochondrial outer membrane protein porin 4 (VDAC4).